The chain runs to 369 residues: Endoglucanase (369 aa).

A signal peptide spans 1 to 22; the sequence is MMTMLRGWITMIVMLTAINAQA. E56 functions as the Proton donor in the catalytic mechanism. D117 serves as the catalytic Nucleophile.

This sequence belongs to the glycosyl hydrolase 8 (cellulase D) family.

Its subcellular location is the secreted. The enzyme catalyses Endohydrolysis of (1-&gt;4)-beta-D-glucosidic linkages in cellulose, lichenin and cereal beta-D-glucans.. The protein operates within glycan metabolism; bacterial cellulose biosynthesis. Functionally, hydrolyzes carboxymethylcellulose. The polypeptide is Endoglucanase (bcsZ) (Salmonella typhi).